The following is a 148-amino-acid chain: Large ribosomal subunit protein bL9 (148 aa).

This sequence belongs to the bacterial ribosomal protein bL9 family.

Binds to the 23S rRNA. The sequence is that of Large ribosomal subunit protein bL9 from Ruminiclostridium cellulolyticum (strain ATCC 35319 / DSM 5812 / JCM 6584 / H10) (Clostridium cellulolyticum).